A 179-amino-acid polypeptide reads, in one-letter code: Protein P20B (179 aa).

The sequence is that of Protein P20B from Vitis vinifera (Grape).